We begin with the raw amino-acid sequence, 382 residues long: Succinate--CoA ligase [ADP-forming] subunit beta (382 aa).

Residues 9-240 (KELFSKYGVK…PRDVSEFEMY (232 aa)) form the ATP-grasp domain. ATP is bound by residues Lys45, 52 to 54 (GRG), Val94, and Glu99. 2 residues coordinate Mg(2+): Asn193 and Asp207. Residues Asn260 and 317 to 319 (GIT) each bind substrate.

Belongs to the succinate/malate CoA ligase beta subunit family. Heterotetramer of two alpha and two beta subunits. The cofactor is Mg(2+).

It carries out the reaction succinate + ATP + CoA = succinyl-CoA + ADP + phosphate. The enzyme catalyses GTP + succinate + CoA = succinyl-CoA + GDP + phosphate. Its pathway is carbohydrate metabolism; tricarboxylic acid cycle; succinate from succinyl-CoA (ligase route): step 1/1. In terms of biological role, succinyl-CoA synthetase functions in the citric acid cycle (TCA), coupling the hydrolysis of succinyl-CoA to the synthesis of either ATP or GTP and thus represents the only step of substrate-level phosphorylation in the TCA. The beta subunit provides nucleotide specificity of the enzyme and binds the substrate succinate, while the binding sites for coenzyme A and phosphate are found in the alpha subunit. This Pyrobaculum arsenaticum (strain DSM 13514 / JCM 11321 / PZ6) protein is Succinate--CoA ligase [ADP-forming] subunit beta.